We begin with the raw amino-acid sequence, 56 residues long: Attractin (56 aa).

Intrachain disulfides connect Cys-4/Cys-41, Cys-13/Cys-33, and Cys-20/Cys-26.

As to expression, produced by the albumen gland of the egg cordons.

It is found in the secreted. In terms of biological role, water-borne pheromone that attract the marine mollusk Aplysia into breeding aggregations and coordinate male and female reproductive behavior within the aggregation. The sequence is that of Attractin (ATT) from Aplysia vaccaria (California black sea hare).